The sequence spans 336 residues: Monoacylglycerol lipase ABHD6 (336 aa).

Over 1–8 the chain is Extracellular; it reads MDLDVVNM. A helical; Signal-anchor for type II membrane protein transmembrane segment spans residues 9–29; sequence FVIAGGTLAIPILAFVASFLL. Over 30-336 the chain is Cytoplasmic; the sequence is WPSALIRIYY…VHNTDNKKLN (307 aa). The active-site Nucleophile is S148. Active-site charge relay system residues include D278 and H306.

The protein belongs to the AB hydrolase superfamily. As to expression, widely expressed with higher expression in small intestine, liver and brown adipose tissue. In brain, expressed postsynaptically in cortical neurons but not detected in microglia (at protein level).

The protein resides in the late endosome membrane. The protein localises to the lysosome membrane. Its subcellular location is the mitochondrion membrane. It carries out the reaction Hydrolyzes glycerol monoesters of long-chain fatty acids.. It catalyses the reaction 2-(5Z,8Z,11Z,14Z-eicosatetraenoyl)-glycerol + H2O = glycerol + (5Z,8Z,11Z,14Z)-eicosatetraenoate + H(+). The enzyme catalyses 1-octanoylglycerol + H2O = octanoate + glycerol + H(+). The catalysed reaction is 1-decanoylglycerol + H2O = decanoate + glycerol + H(+). It carries out the reaction 1-dodecanoylglycerol + H2O = dodecanoate + glycerol + H(+). It catalyses the reaction 1-tetradecanoylglycerol + H2O = tetradecanoate + glycerol + H(+). The enzyme catalyses 2-hexadecanoylglycerol + H2O = glycerol + hexadecanoate + H(+). The catalysed reaction is 2-(9Z-octadecenoyl)-glycerol + H2O = glycerol + (9Z)-octadecenoate + H(+). It carries out the reaction 1-(9Z-octadecenoyl)-glycerol + H2O = glycerol + (9Z)-octadecenoate + H(+). It catalyses the reaction 2-(9Z,12Z-octadecadienoyl)-glycerol + H2O = (9Z,12Z)-octadecadienoate + glycerol + H(+). The enzyme catalyses 1-(5Z,8Z,11Z,14Z-eicosatetraenoyl)-glycerol + H2O = glycerol + (5Z,8Z,11Z,14Z)-eicosatetraenoate + H(+). The catalysed reaction is 1-(9Z,12Z-octadecadienoyl)-glycerol + H2O = (9Z,12Z)-octadecadienoate + glycerol + H(+). It carries out the reaction 3-(9Z-octadecenoyl)-sn-glycero-1-phospho-(3'-(9Z-octadecenoyl)-1'-sn-glycerol) + H2O = 3-(9Z-octadecenoyl)-sn-glycero-1-phospho-(1'-sn-glycerol) + (9Z)-octadecenoate + H(+). It catalyses the reaction (S,S)-2-(9Z-octadecenoyl)-sn-glycero-1-phospho-(2'-(9Z-octadecenoyl)-1'-sn-glycerol) + H2O = (S,S)-2-(9Z-octadecenoyl)-sn-glycero-1-phospho-(1'-sn-glycerol) + (9Z)-octadecenoate + H(+). The enzyme catalyses (R,R)-2-(9Z-octadecenoyl)-sn-glycero-3-phospho-(2'-(9Z-octadecenoyl)-3'-sn-glycerol) + H2O = (R,R)-2-(9Z-octadecenoyl)-sn-glycero-3-phospho-(3'-sn-glycerol) + (9Z)-octadecenoate + H(+). In terms of biological role, lipase that preferentially hydrolysis medium-chain saturated monoacylglycerols including 2-arachidonoylglycerol. Through 2-arachidonoylglycerol degradation may regulate endocannabinoid signaling pathways. Also has a lysophosphatidyl lipase activity with a preference for lysophosphatidylglycerol among other lysophospholipids. Also able to degrade bis(monoacylglycero)phosphate (BMP) and constitutes the major enzyme for BMP catabolism. BMP, also known as lysobisphosphatidic acid, is enriched in late endosomes and lysosomes and plays a key role in the formation of intraluminal vesicles and in lipid sorting. The protein is Monoacylglycerol lipase ABHD6 of Mus musculus (Mouse).